The sequence spans 518 residues: Laccase (518 aa).

Residues 1–21 (MSRFQSLLSFVLVSLAAVANA) form the signal peptide. 2 consecutive Plastocyanin-like domains span residues 23-148 (IGPV…FVVY) and 160-302 (IDND…ILRY). N-linked (GlcNAc...) asparagine glycans are attached at residues Asn-72 and Asn-75. His-85, His-87, His-130, and His-132 together coordinate Cu cation. 2 disulfides stabilise this stretch: Cys-106–Cys-507 and Cys-138–Cys-226. Residue Asn-229 is glycosylated (N-linked (GlcNAc...) asparagine). The tract at residues 308-330 (VEPTTTQTTSTKPLNEADLHPLT) is disordered. N-linked (GlcNAc...) asparagine glycans are attached at residues Asn-354, Asn-362, and Asn-398. Residues 369 to 489 (SVPVLLQILS…AGFAVVLAED (121 aa)) form the Plastocyanin-like 3 domain. 7 residues coordinate Cu cation: His-416, His-419, His-421, His-471, Cys-472, His-473, and His-477.

It belongs to the multicopper oxidase family. Cu cation serves as cofactor.

It is found in the secreted. The catalysed reaction is 4 hydroquinone + O2 = 4 benzosemiquinone + 2 H2O. Lignin degradation and detoxification of lignin-derived products. Cleaves the C-C and C-O bonds of some phenolic lignin model compounds (such as O- and P-quinols, aminophenols and phenylenediamine). May also be involved in synthesis of phenoxazinone pigments. This chain is Laccase (LCC3-1), found in Pycnoporus cinnabarinus (Cinnabar-red polypore).